Reading from the N-terminus, the 178-residue chain is C-phycoerythrin class 2 subunit beta (178 aa).

Cysteine 50 and cysteine 61 together coordinate phycourobilin. (2R,3E)-phycoerythrobilin is bound by residues cysteine 82 and cysteine 159.

Belongs to the phycobiliprotein family. In terms of assembly, heterodimer of an alpha and a beta chain. Post-translationally, contains two covalently linked phycoerythrobilin chromophores and one covalently linked phycourobilin chromophore.

The protein localises to the cellular thylakoid membrane. In terms of biological role, light-harvesting photosynthetic bile pigment-protein from the phycobiliprotein complex. The polypeptide is C-phycoerythrin class 2 subunit beta (mpeB) (Synechococcus sp. (strain WH8020)).